The following is a 208-amino-acid chain: 3-demethoxyubiquinol 3-hydroxylase (208 aa).

Residues E57, E87, H90, E139, E171, and H174 each contribute to the Fe cation site.

Belongs to the COQ7 family. Requires Fe cation as cofactor.

Its subcellular location is the cell membrane. The enzyme catalyses a 5-methoxy-2-methyl-3-(all-trans-polyprenyl)benzene-1,4-diol + AH2 + O2 = a 3-demethylubiquinol + A + H2O. The protein operates within cofactor biosynthesis; ubiquinone biosynthesis. In terms of biological role, catalyzes the hydroxylation of 2-nonaprenyl-3-methyl-6-methoxy-1,4-benzoquinol during ubiquinone biosynthesis. In Burkholderia mallei (strain NCTC 10229), this protein is 3-demethoxyubiquinol 3-hydroxylase.